The chain runs to 118 residues: Ribulose bisphosphate carboxylase small subunit (118 aa).

It belongs to the RuBisCO small chain family. Heterohexadecamer of 8 large and 8 small subunits.

Its function is as follows. RuBisCO catalyzes two reactions: the carboxylation of D-ribulose 1,5-bisphosphate, the primary event in carbon dioxide fixation, as well as the oxidative fragmentation of the pentose substrate. Both reactions occur simultaneously and in competition at the same active site. Although the small subunit is not catalytic it is essential for maximal activity. The polypeptide is Ribulose bisphosphate carboxylase small subunit (Thiobacillus denitrificans (strain ATCC 25259 / T1)).